A 293-amino-acid chain; its full sequence is Probable mediator of RNA polymerase II transcription subunit 15b (293 aa).

This sequence belongs to the plant Mediator complex subunit 15 family. As to quaternary structure, component of the Mediator complex.

It localises to the nucleus. Component of the Mediator complex, a coactivator involved in the regulated transcription of nearly all RNA polymerase II-dependent genes. Mediator functions as a bridge to convey information from gene-specific regulatory proteins to the basal RNA polymerase II transcription machinery. The Mediator complex, having a compact conformation in its free form, is recruited to promoters by direct interactions with regulatory proteins and serves for the assembly of a functional preinitiation complex with RNA polymerase II and the general transcription factors. The polypeptide is Probable mediator of RNA polymerase II transcription subunit 15b (MED15B) (Arabidopsis thaliana (Mouse-ear cress)).